A 602-amino-acid polypeptide reads, in one-letter code: Exopolysaccharide phosphotransferase SCO2594 (602 aa).

Positions 251–271 (PRAGEDLDAGDGAAGGPRPGL) are disordered.

The protein belongs to the stealth family.

This chain is Exopolysaccharide phosphotransferase SCO2594, found in Streptomyces coelicolor (strain ATCC BAA-471 / A3(2) / M145).